The following is a 396-amino-acid chain: S-adenosylmethionine synthase (396 aa).

Histidine 16 is an ATP binding site. Aspartate 18 provides a ligand contact to Mg(2+). Residue glutamate 44 coordinates K(+). 2 residues coordinate L-methionine: glutamate 57 and glutamine 100. Residues 100-110 (QSVDIAQGVDR) form a flexible loop region. Residues 165 to 167 (DAK), aspartate 240, 246 to 247 (RK), alanine 263, and lysine 267 each bind ATP. Aspartate 240 is an L-methionine binding site. L-methionine is bound at residue lysine 271.

Belongs to the AdoMet synthase family. Homotetramer; dimer of dimers. It depends on Mg(2+) as a cofactor. Requires K(+) as cofactor.

The protein resides in the cytoplasm. The enzyme catalyses L-methionine + ATP + H2O = S-adenosyl-L-methionine + phosphate + diphosphate. It participates in amino-acid biosynthesis; S-adenosyl-L-methionine biosynthesis; S-adenosyl-L-methionine from L-methionine: step 1/1. Catalyzes the formation of S-adenosylmethionine (AdoMet) from methionine and ATP. The overall synthetic reaction is composed of two sequential steps, AdoMet formation and the subsequent tripolyphosphate hydrolysis which occurs prior to release of AdoMet from the enzyme. The chain is S-adenosylmethionine synthase from Pseudomonas putida (strain ATCC 700007 / DSM 6899 / JCM 31910 / BCRC 17059 / LMG 24140 / F1).